Consider the following 446-residue polypeptide: Glycerol-3-phosphate acyltransferase 3 (446 aa).

A run of 3 helical transmembrane segments spans residues 11-31 (IFIIWLTLVIVLILLPSMFGS), 146-166 (LRVTLIWVLGLCVRYCILLPL), and 168-188 (ITLATIGISWLVLGATLVGQL). An HXXXXD motif motif is present at residues 236-241 (HTSPID).

Belongs to the 1-acyl-sn-glycerol-3-phosphate acyltransferase family.

The protein resides in the endoplasmic reticulum membrane. It carries out the reaction sn-glycerol 3-phosphate + an acyl-CoA = a 1-acyl-sn-glycero-3-phosphate + CoA. It catalyses the reaction a 1-acyl-sn-glycero-3-phosphate + an acyl-CoA = a 1,2-diacyl-sn-glycero-3-phosphate + CoA. The enzyme catalyses dodecanoyl-CoA + sn-glycerol 3-phosphate = 1-dodecanoyl-sn-glycerol 3-phosphate + CoA. The catalysed reaction is sn-glycerol 3-phosphate + hexadecanoyl-CoA = 1-hexadecanoyl-sn-glycero-3-phosphate + CoA. It carries out the reaction sn-glycerol 3-phosphate + (9Z)-octadecenoyl-CoA = 1-(9Z-octadecenoyl)-sn-glycero-3-phosphate + CoA. It catalyses the reaction (9Z,12Z)-octadecadienoyl-CoA + sn-glycerol 3-phosphate = 1-(9Z,12Z)-octadecadienoyl-sn-glycero-3-phosphate + CoA. The enzyme catalyses 1-tetradecanoyl-sn-glycerol 3-phosphate + (9Z)-octadecenoyl-CoA = 1-tetradecanoyl-2-(9Z)-octadecenoyl-sn-glycero-3-phosphate + CoA. The catalysed reaction is 1-hexadecanoyl-sn-glycero-3-phosphate + (9Z)-octadecenoyl-CoA = 1-hexadecanoyl-2-(9Z-octadecenoyl)-sn-glycero-3-phosphate + CoA. It carries out the reaction 1-(9Z-octadecenoyl)-sn-glycero-3-phosphate + (9Z)-octadecenoyl-CoA = 1,2-di-(9Z-octadecenoyl)-sn-glycero-3-phosphate + CoA. It catalyses the reaction 1-(6Z,9Z,12Z-octadecatrienoyl)-sn-glycero-3-phosphate + (9Z)-octadecenoyl-CoA = (6Z,9Z,12Z)-octadecatrienoyl-2-(9Z)-octadecenoyl-sn-glycero-3-phosphate + CoA. The enzyme catalyses 1-(9Z,12Z,15Z)-octadecatrienoyl-sn-glycero-3-phosphate + (9Z)-octadecenoyl-CoA = 1-(9Z,12Z,15Z)-octadecatrienoyl-2-(9Z)-octadecenoyl-sn-glycero-3-phosphate + CoA. The catalysed reaction is 1-(9Z-octadecenoyl)-sn-glycero-3-phosphate + tetradecanoyl-CoA = 1-(9Z)-octadecenoyl-2-tetradecanoyl-sn-glycero-3-phosphate + CoA. It carries out the reaction 1-(9Z-octadecenoyl)-sn-glycero-3-phosphate + hexadecanoyl-CoA = 1-(9Z)-octadecenoyl-2-hexadecanoyl-sn-glycero-3-phosphate + CoA. It catalyses the reaction 1-(9Z-octadecenoyl)-sn-glycero-3-phosphate + octadecanoyl-CoA = 1-(9Z-octadecenoyl)-2-octadecanoyl-sn-glycero-3-phosphate + CoA. The enzyme catalyses 1-(9Z-octadecenoyl)-sn-glycero-3-phosphate + (9Z,12Z)-octadecadienoyl-CoA = 1-(9Z)-octadecenoyl-2-(9Z,12Z)-octadecadienoyl-sn-glycero-3-phosphate + CoA. The catalysed reaction is 1-(5Z,8Z,11Z,14Z-eicosatetraenoyl)-sn-glycero-3-phosphate + (9Z)-octadecenoyl-CoA = 1-(5Z,8Z,11Z,14Z)-eicosatetraenoyl-2-(9Z)-octadecenoyl-sn-glycero-3-phosphate + CoA. It participates in glycerolipid metabolism; triacylglycerol biosynthesis. Its pathway is phospholipid metabolism; CDP-diacylglycerol biosynthesis; CDP-diacylglycerol from sn-glycerol 3-phosphate: step 1/3. Converts glycerol-3-phosphate to 1-acyl-sn-glycerol-3-phosphate (lysophosphatidic acid or LPA) by incorporating an acyl moiety at the sn-1 position of the glycerol backbone. Also converts LPA into 1,2-diacyl-sn-glycerol-3-phosphate (phosphatidic acid or PA) by incorporating an acyl moiety at the sn-2 position of the glycerol backbone. Protects cells against lipotoxicity. In Xenopus laevis (African clawed frog), this protein is Glycerol-3-phosphate acyltransferase 3.